The following is a 118-amino-acid chain: Holo-[acyl-carrier-protein] synthase (118 aa).

Positions 8 and 58 each coordinate Mg(2+).

It belongs to the P-Pant transferase superfamily. AcpS family. Mg(2+) is required as a cofactor.

The protein resides in the cytoplasm. It carries out the reaction apo-[ACP] + CoA = holo-[ACP] + adenosine 3',5'-bisphosphate + H(+). In terms of biological role, transfers the 4'-phosphopantetheine moiety from coenzyme A to a Ser of acyl-carrier-protein. The sequence is that of Holo-[acyl-carrier-protein] synthase from Streptococcus pyogenes serotype M1.